The primary structure comprises 150 residues: 3-dehydroquinate dehydratase (150 aa).

Y26 (proton acceptor) is an active-site residue. The substrate site is built by N77, H83, and D90. H103 serves as the catalytic Proton donor. Substrate contacts are provided by residues 104 to 105 (LS) and R114.

This sequence belongs to the type-II 3-dehydroquinase family. In terms of assembly, homododecamer.

It catalyses the reaction 3-dehydroquinate = 3-dehydroshikimate + H2O. The protein operates within metabolic intermediate biosynthesis; chorismate biosynthesis; chorismate from D-erythrose 4-phosphate and phosphoenolpyruvate: step 3/7. Catalyzes a trans-dehydration via an enolate intermediate. In Pseudoalteromonas translucida (strain TAC 125), this protein is 3-dehydroquinate dehydratase.